The sequence spans 311 residues: Putative dihydroorotate dehydrogenase A (fumarate) (311 aa).

Substrate contacts are provided by residues lysine 45, 69-73 (NSMGL), and asparagine 128. An FMN-binding site is contributed by 45–46 (KT). FMN is bound at residue asparagine 128. Residue cysteine 131 is the Nucleophile of the active site. The FMN site is built by lysine 165 and valine 193. 194 to 195 (NS) contacts substrate. FMN is bound by residues glycine 220, 248 to 249 (GG), and 270 to 271 (GT).

It belongs to the dihydroorotate dehydrogenase family. Type 1 subfamily. Homodimer. Requires FMN as cofactor.

It is found in the cytoplasm. The enzyme catalyses (S)-dihydroorotate + fumarate = orotate + succinate. Its pathway is pyrimidine metabolism; UMP biosynthesis via de novo pathway. Functionally, catalyzes the conversion of dihydroorotate to orotate with fumarate as the electron acceptor. This is Putative dihydroorotate dehydrogenase A (fumarate) (pyrD) from Streptococcus pyogenes serotype M18 (strain MGAS8232).